The sequence spans 907 residues: Translation initiation factor IF-2 (907 aa).

Positions 1-305 are disordered; that stretch reads MSEGNDQDQG…SLASVRRQRE (305 aa). A compositionally biased stretch (gly residues) spans 62–80; it reads SGSGSSGGGRAGGRGGSGG. Composition is skewed to basic and acidic residues over residues 93–114 and 122–158; these read RVLEEQRAEAVRREQERREQEK and EEARRRDEEARRAAEDEVREKEEAAARAREEEAERRA. Residues 211–230 are compositionally biased toward low complexity; the sequence is PARPVTPSRPATPAATPQAP. 2 stretches are compositionally biased toward basic and acidic residues: residues 240 to 249 and 271 to 280; these read RVGEAEDDRR and KGGDSRRSGR. In terms of domain architecture, tr-type G spans 406-576; sequence PRPPVVTVMG…LLQAEMLDLR (171 aa). The interval 415-422 is G1; that stretch reads GHVDHGKT. GTP is bound at residue 415–422; that stretch reads GHVDHGKT. Positions 440–444 are G2; sequence GITQH. The G3 stretch occupies residues 462-465; that stretch reads DTPG. Residues 462–466 and 516–519 each bind GTP; these read DTPGH and NKCD. The tract at residues 516–519 is G4; that stretch reads NKCD. The interval 552 to 554 is G5; it reads SAL.

The protein belongs to the TRAFAC class translation factor GTPase superfamily. Classic translation factor GTPase family. IF-2 subfamily.

The protein localises to the cytoplasm. One of the essential components for the initiation of protein synthesis. Protects formylmethionyl-tRNA from spontaneous hydrolysis and promotes its binding to the 30S ribosomal subunits. Also involved in the hydrolysis of GTP during the formation of the 70S ribosomal complex. This is Translation initiation factor IF-2 from Gluconacetobacter diazotrophicus (strain ATCC 49037 / DSM 5601 / CCUG 37298 / CIP 103539 / LMG 7603 / PAl5).